The primary structure comprises 421 residues: ATP-dependent RNA helicase RhlB (421 aa).

A Q motif motif is present at residues 9–37 (QKFSDFALHPAVIEALEKKGFHNCTPIQA). The region spanning 40 to 219 (LPLTLEGRDV…FEQMNNAEYV (180 aa)) is the Helicase ATP-binding domain. 53-60 (AQTGTGKT) lines the ATP pocket. A DEAD box motif is present at residues 165 to 168 (DEAD). The Helicase C-terminal domain maps to 245–390 (RLLQTLLEEE…VSKYNPDALM (146 aa)). Residues 396–421 (PLRLTRARPGNGPRRNGPPRNRRRSG) are disordered. The span at 403–414 (RPGNGPRRNGPP) shows a compositional bias: low complexity.

Belongs to the DEAD box helicase family. RhlB subfamily. Component of the RNA degradosome, which is a multiprotein complex involved in RNA processing and mRNA degradation.

It is found in the cytoplasm. It catalyses the reaction ATP + H2O = ADP + phosphate + H(+). In terms of biological role, DEAD-box RNA helicase involved in RNA degradation. Has RNA-dependent ATPase activity and unwinds double-stranded RNA. This is ATP-dependent RNA helicase RhlB from Klebsiella pneumoniae (strain 342).